A 457-amino-acid polypeptide reads, in one-letter code: MRTEWVAKRRGQGNVTQMHYARQGVITEEMQYVAQRENLPADLIREEVARGRMIIPANINHTNLEPMAIGIASKCKVNANIGASPNSSNLQEEVDKLNLAVKYGADTVMDLSTGGGNLDEIRTAIINASPVPIGTVPVYQALESVHGTIENLTPEDFLHIIEKHAQQGVDYQTIHAGILIEHLPLVRSRITGIVSRGGGILARWMLHHHKQNPLYTHFRDIIEIFKRYDVSFSLGDSLRPGCTHDASDDAQLAELKTLGQLTRKAWEHDVQVMVEGPGHVPMDQIEFNVKKQMEECSEAPFYVLGPLVTDIAPGYDHITSAIGAAMAGWYGTAMLCYVTPKEHLGLPNAEDVRNGLIAYKIAAHAADIARHRPGARDRDDELSKARYNFDWNRQFELSLDPERAKEYHDETLPADIYKTAEFCSMCGPKFCPMQTKVDADALTELEKFLAKEKEVMI.

Substrate contacts are provided by residues Asn-80, Met-109, Tyr-139, His-175, 195-197, 236-239, and Glu-275; these read SRG and DSLR. Zn(2+) is bound at residue His-279. Tyr-302 provides a ligand contact to substrate. His-343 lines the Zn(2+) pocket. [4Fe-4S] cluster is bound by residues Cys-423, Cys-426, and Cys-431.

Belongs to the ThiC family. [4Fe-4S] cluster is required as a cofactor.

It carries out the reaction 5-amino-1-(5-phospho-beta-D-ribosyl)imidazole + S-adenosyl-L-methionine = 4-amino-2-methyl-5-(phosphooxymethyl)pyrimidine + CO + 5'-deoxyadenosine + formate + L-methionine + 3 H(+). Its pathway is cofactor biosynthesis; thiamine diphosphate biosynthesis. In terms of biological role, catalyzes the synthesis of the hydroxymethylpyrimidine phosphate (HMP-P) moiety of thiamine from aminoimidazole ribotide (AIR) in a radical S-adenosyl-L-methionine (SAM)-dependent reaction. This is Phosphomethylpyrimidine synthase from Trichormus variabilis (strain ATCC 29413 / PCC 7937) (Anabaena variabilis).